Consider the following 77-residue polypeptide: Large ribosomal subunit protein uL29 (77 aa).

Belongs to the universal ribosomal protein uL29 family.

This Gluconobacter oxydans (strain 621H) (Gluconobacter suboxydans) protein is Large ribosomal subunit protein uL29.